Consider the following 155-residue polypeptide: Putative pre-16S rRNA nuclease (155 aa).

Belongs to the YqgF nuclease family.

Its subcellular location is the cytoplasm. Functionally, could be a nuclease involved in processing of the 5'-end of pre-16S rRNA. The chain is Putative pre-16S rRNA nuclease from Xanthomonas oryzae pv. oryzae (strain MAFF 311018).